A 195-amino-acid polypeptide reads, in one-letter code: MKSLKGTKTAENLMKAFAGESQARNRYTFYSNTAKKEGYVQISNIFLETAENERMHAKRFFKFLSEGLDDEAVEINGASYPTTLGDTKKNLIAAAKGENEEWTDLYPSFAKTAEDEGFKGVAAAFRLIAAVEKEHEKRYNALLKNIEENKVFEKDEVKFWKCIKCGYIFEGKTAPKVCPACLHPQAYFEILSENY.

In terms of domain architecture, Ferritin-like diiron spans 3-150 (SLKGTKTAEN…ALLKNIEENK (148 aa)). Residues glutamate 20, glutamate 53, glutamate 98, glutamate 101, glutamate 132, histidine 135, cysteine 162, cysteine 165, cysteine 178, and cysteine 181 each coordinate Fe(3+). The Rubredoxin-like domain occupies 157–191 (VKFWKCIKCGYIFEGKTAPKVCPACLHPQAYFEIL).

In terms of assembly, homodimer. The cofactor is Fe(3+).

The enzyme catalyses H2O2 + NADH + H(+) = NAD(+) + 2 H2O. Its activity is regulated as follows. Rubredoxin (Rd) increases the NADH consumption rate by serving as an intermediary electron-transfer shuttle between NROR and RubY. In terms of biological role, functions as the terminal component of an NADH peroxidase (NADH:H(2)O(2) oxidoreductase) when using NADH:rubredoxin oxidoreductase (NROR) as the electron transport intermediary from NADH to RubY. In Clostridium acetobutylicum (strain ATCC 824 / DSM 792 / JCM 1419 / IAM 19013 / LMG 5710 / NBRC 13948 / NRRL B-527 / VKM B-1787 / 2291 / W), this protein is Rubrerythrin-1 (rbr1).